The following is a 219-amino-acid chain: 3-dehydroquinate dehydratase (219 aa).

3-dehydroquinate-binding positions include Ser-10, 29-31 (EVR), and Arg-59. The Proton donor/acceptor role is filled by His-116. Residue Lys-142 is the Schiff-base intermediate with substrate of the active site. Arg-180 and Gln-203 together coordinate 3-dehydroquinate.

Belongs to the type-I 3-dehydroquinase family. As to quaternary structure, homodimer.

It catalyses the reaction 3-dehydroquinate = 3-dehydroshikimate + H2O. The protein operates within metabolic intermediate biosynthesis; chorismate biosynthesis; chorismate from D-erythrose 4-phosphate and phosphoenolpyruvate: step 3/7. Involved in the third step of the chorismate pathway, which leads to the biosynthesis of aromatic amino acids. Catalyzes the cis-dehydration of 3-dehydroquinate (DHQ) and introduces the first double bond of the aromatic ring to yield 3-dehydroshikimate. The polypeptide is 3-dehydroquinate dehydratase (Methanocella arvoryzae (strain DSM 22066 / NBRC 105507 / MRE50)).